Reading from the N-terminus, the 344-residue chain is Lysophosphatidic acid receptor 6 (344 aa).

The Extracellular portion of the chain corresponds to 1–19 (MVSVNSSHCFYNDSFKYTL). N-linked (GlcNAc...) asparagine glycosylation is present at Asn-5. A helical transmembrane segment spans residues 20–46 (YGCMFSMVFVLGLISNCVAIYIFICVL). Residues 47 to 55 (KVRNETTTY) are Cytoplasmic-facing. A helical membrane pass occupies residues 56–79 (MINLAMSDLLFVFTLPFRIFYFTT). Over 80-92 (RNWPFGDLLCKIS) the chain is Extracellular. Cys-89 and Cys-168 are joined by a disulfide. The helical transmembrane segment at 93–112 (VMLFYTNMYGSILFLTCISV) threads the bilayer. Topologically, residues 113-133 (DRFLAIVYPFKSKTLRTKRNA) are cytoplasmic. A helical membrane pass occupies residues 134–154 (KIVCTGVWLTVIGGSAPAVFV). Residues 155–181 (QSTHSQGNNASEACFENFPEATWKTYL) are Extracellular-facing. A helical transmembrane segment spans residues 182 to 209 (SRIVIFIEIVGFFIPLILNVTCSSMVLK). At 210–227 (TLTKPVTLSRSKINKTKV) the chain is on the cytoplasmic side. A helical transmembrane segment spans residues 228 to 253 (LKMIFVHLIIFCFCFVPYNINLILYS). At 254–272 (LVRTQTFVNCSVVAAVRTM) the chain is on the extracellular side. The helical transmembrane segment at 273-292 (YPITLCIAVSNCCFDPIVYY) threads the bilayer. Residue Cys-284 is the site of S-palmitoyl cysteine attachment. Topologically, residues 293–344 (FTSDTIQNSIKMKNWSVRRSDFRFSEVHGAENFIQHNLQTLKSKIFDNESAA) are cytoplasmic.

This sequence belongs to the G-protein coupled receptor 1 family. Expressed ubiquitously, including in skin and hair follicle cells. Detected in both Henle's and Huxley's layers of the inner root sheath of the hair follicle and in suprabasal layers of the epidermis (at protein level). Expressed at low levels in peripheral blood leukocytes.

Its subcellular location is the cell membrane. In terms of biological role, binds to oleoyl-L-alpha-lysophosphatidic acid (LPA). Intracellular cAMP is involved in the receptor activation. Important for the maintenance of hair growth and texture. The polypeptide is Lysophosphatidic acid receptor 6 (LPAR6) (Homo sapiens (Human)).